The primary structure comprises 117 residues: Ribosome-binding factor A (117 aa).

Belongs to the RbfA family. Monomer. Binds 30S ribosomal subunits, but not 50S ribosomal subunits or 70S ribosomes.

Its subcellular location is the cytoplasm. Functionally, one of several proteins that assist in the late maturation steps of the functional core of the 30S ribosomal subunit. Associates with free 30S ribosomal subunits (but not with 30S subunits that are part of 70S ribosomes or polysomes). Required for efficient processing of 16S rRNA. May interact with the 5'-terminal helix region of 16S rRNA. The sequence is that of Ribosome-binding factor A from Blochmanniella floridana.